A 310-amino-acid chain; its full sequence is 4-hydroxyproline epimerase (310 aa).

C88 acts as the Proton acceptor in catalysis. Residues 89–90 (GH), H208, and D232 contribute to the substrate site. Catalysis depends on C236, which acts as the Proton donor. Residue 237–238 (GT) participates in substrate binding.

The protein belongs to the proline racemase family. In terms of assembly, homodimer.

It carries out the reaction trans-4-hydroxy-L-proline = cis-4-hydroxy-D-proline. Inhibited by iodoacetate, iodoacetamide and by high amounts (10 mM) of pyrrole-2-carboxylic acid (PYC). Not inhibited by PYC at 1 mM. In terms of biological role, allows intracellular utilization of 4-hydroxyproline, one of the major constituents of host collagen, by converting 4-hydroxy-L-proline to 4-hydroxy-D-proline, which can be further metabolized by intracellular 4-hydroxy-D-proline oxidases. The sequence is that of 4-hydroxyproline epimerase from Burkholderia pseudomallei (strain K96243).